The following is a 202-amino-acid chain: Type II restriction enzyme MunI (202 aa).

Homodimer.

The enzyme catalyses Endonucleolytic cleavage of DNA to give specific double-stranded fragments with terminal 5'-phosphates.. Functionally, a P subtype restriction enzyme that recognizes the double-stranded sequence 5'-CAATTG-3' and cleaves after C-1. This Mycoplasma sp protein is Type II restriction enzyme MunI.